The sequence spans 360 residues: Peptide chain release factor 1 (360 aa).

Residue Q235 is modified to N5-methylglutamine.

Belongs to the prokaryotic/mitochondrial release factor family. In terms of processing, methylated by PrmC. Methylation increases the termination efficiency of RF1.

The protein resides in the cytoplasm. Functionally, peptide chain release factor 1 directs the termination of translation in response to the peptide chain termination codons UAG and UAA. This Paraburkholderia phymatum (strain DSM 17167 / CIP 108236 / LMG 21445 / STM815) (Burkholderia phymatum) protein is Peptide chain release factor 1.